We begin with the raw amino-acid sequence, 485 residues long: Alginate biosynthesis protein AlgA (485 aa).

This sequence belongs to the mannose-6-phosphate isomerase type 2 family. Monomer. The cofactor is Co(2+).

It catalyses the reaction D-mannose 6-phosphate = D-fructose 6-phosphate. It carries out the reaction alpha-D-mannose 1-phosphate + GTP + H(+) = GDP-alpha-D-mannose + diphosphate. Its pathway is nucleotide-sugar biosynthesis; GDP-alpha-D-mannose biosynthesis; GDP-alpha-D-mannose from alpha-D-mannose 1-phosphate (GTP route): step 1/1. It functions in the pathway nucleotide-sugar biosynthesis; GDP-alpha-D-mannose biosynthesis; alpha-D-mannose 1-phosphate from D-fructose 6-phosphate: step 1/2. Its function is as follows. Produces a precursor for alginate polymerization. The alginate layer provides a protective barrier against host immune defenses and antibiotics. The chain is Alginate biosynthesis protein AlgA (algA) from Pseudomonas putida (strain ATCC 47054 / DSM 6125 / CFBP 8728 / NCIMB 11950 / KT2440).